A 144-amino-acid polypeptide reads, in one-letter code: Large ribosomal subunit protein uL16 (144 aa).

Positions 1 to 17 (MLQPKKTKFRRQQKGRA) are enriched in basic residues. The interval 1–22 (MLQPKKTKFRRQQKGRAKGNAQ) is disordered.

It belongs to the universal ribosomal protein uL16 family. In terms of assembly, part of the 50S ribosomal subunit.

Binds 23S rRNA and is also seen to make contacts with the A and possibly P site tRNAs. This Bacteroides fragilis (strain ATCC 25285 / DSM 2151 / CCUG 4856 / JCM 11019 / LMG 10263 / NCTC 9343 / Onslow / VPI 2553 / EN-2) protein is Large ribosomal subunit protein uL16.